Here is a 55-residue protein sequence, read N- to C-terminus: Cortexin domain containing 2 (55 aa).

A helical membrane pass occupies residues Phe-16–Ala-36.

It localises to the membrane. The polypeptide is Cortexin domain containing 2 (Homo sapiens (Human)).